Here is a 149-residue protein sequence, read N- to C-terminus: Large ribosomal subunit protein uL13 (149 aa).

This sequence belongs to the universal ribosomal protein uL13 family. As to quaternary structure, part of the 50S ribosomal subunit.

Its function is as follows. This protein is one of the early assembly proteins of the 50S ribosomal subunit, although it is not seen to bind rRNA by itself. It is important during the early stages of 50S assembly. This chain is Large ribosomal subunit protein uL13, found in Pelodictyon phaeoclathratiforme (strain DSM 5477 / BU-1).